Consider the following 674-residue polypeptide: L-type lectin-domain containing receptor kinase SIT1 (674 aa).

An N-terminal signal peptide occupies residues 1-27; it reads MRRPELIMRSLPLILFLSLGSFHLAAA. At 28-301 the chain is on the extracellular side; that stretch reads AVDDQFTFDG…IARAPSNVLK (274 aa). Residues 31–275 form a legume-lectin like region; the sequence is DQFTFDGFAG…VLAWSFKMDG (245 aa). N42, N61, N143, N196, N219, N240, and N281 each carry an N-linked (GlcNAc...) asparagine glycan. A helical transmembrane segment spans residues 302–322; it reads ILLPIASAALVSALAIAVLVI. Residues 323–674 lie on the Cytoplasmic side of the membrane; the sequence is HRRRRRYAEL…GNISDIPRAR (352 aa). The Protein kinase domain maps to 357–636; sequence FSDERLLGFG…LDGAMPLPEL (280 aa). ATP is bound by residues 363–371 and K386; that span reads LGFGGFGRV. Catalysis depends on D482, which acts as the Proton acceptor. Phosphothreonine occurs at positions 511, 515, 516, and 521.

The protein in the C-terminal section; belongs to the protein kinase superfamily. Ser/Thr protein kinase family. It in the N-terminal section; belongs to the leguminous lectin family. As to quaternary structure, interacts with B'KAPPA. Autophosphorylated at Thr-511, Thr-515 or Thr-516, and Thr-521 in response to salt stress. Dephosphorylated by phosphatase 2A in response to salt stress. In terms of tissue distribution, expressed in root epidermal cells.

Its subcellular location is the cell membrane. It carries out the reaction L-seryl-[protein] + ATP = O-phospho-L-seryl-[protein] + ADP + H(+). The catalysed reaction is L-threonyl-[protein] + ATP = O-phospho-L-threonyl-[protein] + ADP + H(+). With respect to regulation, activated by autophosphorylation in response to salt stress. Lectin-domain containing receptor kinase involved in salt stress response. Acts as a negative regulator of salt tolerance. Mediates salt sensitivity by phosphorylating and activating MPK3 and MPK6. Promotes ethylene production and mediates salt-induced ethylene signaling. Promotes the accumulation of reactive oxygen species (ROS) under salt stress conditions. Its kinase activity is triggered by salt stress and is required for its function in salt stress response. Phosphorylates B'KAPPA, a B regulatory subunit of phosphatase 2A (PP2A). This is L-type lectin-domain containing receptor kinase SIT1 from Oryza sativa subsp. japonica (Rice).